Here is a 73-residue protein sequence, read N- to C-terminus: RNA-binding protein Hfq (73 aa).

Residues 8 to 68 (DQFLNQIRKD…ISTFAPQKNV (61 aa)) enclose the Sm domain.

This sequence belongs to the Hfq family. In terms of assembly, homohexamer.

RNA chaperone that binds small regulatory RNA (sRNAs) and mRNAs to facilitate mRNA translational regulation in response to envelope stress, environmental stress and changes in metabolite concentrations. Also binds with high specificity to tRNAs. In Bacillus velezensis (strain DSM 23117 / BGSC 10A6 / LMG 26770 / FZB42) (Bacillus amyloliquefaciens subsp. plantarum), this protein is RNA-binding protein Hfq.